An 809-amino-acid chain; its full sequence is Sodium/hydrogen exchanger 2 (809 aa).

7 helical membrane-spanning segments follow: residues 107–127, 138–158, 169–189, 209–229, 237–257, 278–298, and 308–328; these read IVPE…IIFG, TDVF…YFMP, IFWY…VSLF, LFGS…FENI, ILVF…YNLF, FFVV…IAAF, and VIEP…AEMF. Residue N350 is glycosylated (N-linked (GlcNAc...) asparagine). 4 helical membrane-spanning segments follow: residues 361 to 381, 392 to 412, 430 to 450, and 459 to 479; these read YFMK…MGVS, AFVC…VFVL, FIIA…FLLP, and LFIT…GITI. Basic and acidic residues-rich tracts occupy residues 648–660 and 793–809; these read IRKD…ERRA and RASE…SDKP. 2 disordered regions span residues 648–700 and 734–809; these read IRKD…EADA and EVDA…SDKP.

The protein belongs to the monovalent cation:proton antiporter 1 (CPA1) transporter (TC 2.A.36) family. As to quaternary structure, interacts with CHP1 and CHP2. In terms of tissue distribution, high levels in intestine and kidney. Strongly expressed in gastric epithelial cells, with particularly high expression levels in mucous cells.

The protein resides in the apical cell membrane. The enzyme catalyses Na(+)(in) + H(+)(out) = Na(+)(out) + H(+)(in). Functionally, plasma membrane Na(+)/H(+) antiporter. Mediates the electroneutral exchange of intracellular H(+) ions for extracellular Na(+). Major apical Na(+)/H(+) exchanger in the base of the colonic crypt. Controls in the colonic crypt intracellular pH (pHi) to direct colonic epithelial cell differentiation into the absorptive enterocyte lineage at the expense of the secretory lineage. The protein is Sodium/hydrogen exchanger 2 (SLC9A2) of Oryctolagus cuniculus (Rabbit).